We begin with the raw amino-acid sequence, 602 residues long: Zinc finger MYND domain-containing protein 11 (602 aa).

The SAMD1-like winged helix (WH) domain maps to 6-82 (KRRQADTKAI…CKGSKAGIEQ (77 aa)). The PHD-type zinc finger occupies 100–148 (DWYCFECHLPGEVLICDLCFRVYHSKCLSDEFRLRDSSSHWQCPVCRSI). The Bromo domain occupies 149–255 (KKKHSNKQEM…KDTCHELDEL (107 aa)). The Zn(2+) site is built by cysteine 258, cysteine 261, cysteine 277, and histidine 281. The PWWP domain maps to 280 to 331 (NHELVWAKMKGFGFWPAKVMQKEDNQVDVRFFGHHHQRAWIPSENIQDITVN). The interval 291–310 (FGFWPAKVMQKEDNQVDVRF) is aromatic cage required for H3.3K36me3-specific binding. Residue lysine 366 forms a Glycyl lysine isopeptide (Lys-Gly) (interchain with G-Cter in SUMO2) linkage. Positions 366–461 (KNEDRGEEEA…HRSTQTTSDG (96 aa)) are disordered. Positions 394–400 (RAKKGRR) match the Nuclear localization signal motif. Residues lysine 407 and lysine 408 each participate in a glycyl lysine isopeptide (Lys-Gly) (interchain with G-Cter in SUMO2) cross-link. A Phosphoserine modification is found at serine 421. Positions 435–461 (SVSTQTKKLSASSPRMLHRSTQTTSDG) are enriched in polar residues. Residues cysteine 563, cysteine 566, cysteine 574, cysteine 575, cysteine 581, cysteine 585, histidine 594, and cysteine 598 each contribute to the Zn(2+) site. The MYND-type zinc finger occupies 563–598 (CYNCEEEAMYHCCWNTSYCSIKCQQEHWHAEHKRTC).

In terms of assembly, homooligomer; forms homooligomers via its C-terminus. Interacts with histone H3.3 trimethylated at 'Lys-36' (H3.3K36me3). Interacts (via MYND-type zinc finger) with NCOR1. Interacts (via MYND-type zinc finger) with MGA protein (via PXLXP motif). Interacts (via MYND-type zinc finger) with EZH2. Interacts with EMSY and E2F6. Interacts with PIAS1 and UBE2I. Ubiquitinated, leading to proteasomal degradation. In terms of processing, sumoylated following its interaction with PIAS1 and UBE2I.

The protein localises to the nucleus. It localises to the chromosome. Chromatin reader that specifically recognizes and binds histone H3.3 trimethylated at 'Lys-36' (H3.3K36me3) and regulates RNA polymerase II elongation. Does not bind other histone H3 subtypes (H3.1 or H3.2). Colocalizes with highly expressed genes and functions as a transcription corepressor by modulating RNA polymerase II at the elongation stage. Binds non-specifically to dsDNA. Acts as a tumor-suppressor by repressing a transcriptional program essential for tumor cell growth. This Mus musculus (Mouse) protein is Zinc finger MYND domain-containing protein 11 (Zmynd11).